We begin with the raw amino-acid sequence, 259 residues long: 3-methyl-2-oxobutanoate hydroxymethyltransferase (259 aa).

Mg(2+)-binding residues include D44 and D83. Residues 44–45 (DS), D83, and K112 contribute to the 3-methyl-2-oxobutanoate site. Mg(2+) is bound at residue E114. E177 (proton acceptor) is an active-site residue.

It belongs to the PanB family. Homodecamer; pentamer of dimers. Mg(2+) serves as cofactor.

Its subcellular location is the cytoplasm. The catalysed reaction is 3-methyl-2-oxobutanoate + (6R)-5,10-methylene-5,6,7,8-tetrahydrofolate + H2O = 2-dehydropantoate + (6S)-5,6,7,8-tetrahydrofolate. It participates in cofactor biosynthesis; (R)-pantothenate biosynthesis; (R)-pantoate from 3-methyl-2-oxobutanoate: step 1/2. Catalyzes the reversible reaction in which hydroxymethyl group from 5,10-methylenetetrahydrofolate is transferred onto alpha-ketoisovalerate to form ketopantoate. This chain is 3-methyl-2-oxobutanoate hydroxymethyltransferase, found in Nitratiruptor sp. (strain SB155-2).